A 343-amino-acid chain; its full sequence is Cytoplasmic tRNA 2-thiolation protein 1 (343 aa).

It belongs to the TtcA family. CTU1/NCS6/ATPBD3 subfamily.

The protein resides in the cytoplasm. It participates in tRNA modification; 5-methoxycarbonylmethyl-2-thiouridine-tRNA biosynthesis. Plays a central role in 2-thiolation of mcm(5)S(2)U at tRNA wobble positions of tRNA(Lys), tRNA(Glu) and tRNA(Gln). Directly binds tRNAs and probably acts by catalyzing adenylation of tRNAs, an intermediate required for 2-thiolation. It is unclear whether it acts as a sulfurtransferase that transfers sulfur from thiocarboxylated URM1 onto the uridine of tRNAs at wobble position. This is Cytoplasmic tRNA 2-thiolation protein 1 from Drosophila ananassae (Fruit fly).